The following is a 445-amino-acid chain: Reticulon-4 receptor-like 1 (445 aa).

An N-terminal signal peptide occupies residues 1 to 24 (MLRKGCCVELLLLLLAGELPLGGG). Residues 25–54 (CPRDCVCYPAPMTVSCQAHNFAAIPEGIPE) enclose the LRRNT domain. 8 LRR repeats span residues 55 to 76 (DSER…HFSP), 77 to 98 (AMVT…TFEG), 101 to 123 (HLEE…TFQG), 126 to 147 (KLHA…IFGG), 150 to 171 (SLQY…IFVD), 174 to 195 (NLSH…IFRG), 198 to 219 (NLDR…AFHD), and 222 to 243 (RLTT…CLAP). Residues 255-306 (NAWDCGCRARSLWEWLRRFRGSSSAVPCATPELRQGQDLKLLRVEDFRNCTG) enclose the LRRCT domain. 2 disordered regions span residues 307 to 377 (PVSP…SGKE) and 401 to 424 (RPKR…QQAS). Composition is skewed to basic residues over residues 352–366 (GYKK…HRNR) and 401–413 (RPKR…RRTP). Ser-424 carries the GPI-anchor amidated serine lipid modification. A helical transmembrane segment spans residues 424–444 (SSGTALGAPLLAWILGLAVTL). Residues 425-445 (SGTALGAPLLAWILGLAVTLR) constitute a propeptide, removed in mature form.

Belongs to the Nogo receptor family. As to quaternary structure, identified in a complex that contains RTN4R, RTN4RL1 and NGFR; the interaction depends on the presence of chondroitin sulfate proteoglycans. Does not interact with MAG, OMG and RTN4. In terms of tissue distribution, detected in brain (at protein level). Detected in retina ganglion cell layer and inner nuclear layer.

Its subcellular location is the cell membrane. The protein resides in the membrane raft. The protein localises to the perikaryon. It is found in the cell projection. Cell surface receptor that plays a functionally redundant role in postnatal brain development and in regulating axon regeneration in the adult central nervous system. Contributes to normal axon migration across the brain midline and normal formation of the corpus callosum. Protects motoneurons against apoptosis; protection against apoptosis is probably mediated by MAG. Plays a role in inhibiting neurite outgrowth and axon regeneration via its binding to neuronal chondroitin sulfate proteoglycans. Binds heparin. Like other family members, plays a role in restricting the number dendritic spines and the number of synapses that are formed during brain development. Signaling mediates activation of Rho and downstream reorganization of the actin cytoskeleton. This chain is Reticulon-4 receptor-like 1, found in Mus musculus (Mouse).